The following is a 589-amino-acid chain: MSETKPAANDLSNVPSASDSDKDNSLDKVHSLEKTGVHEDINKLPSSDLEQLEDDGREPTLEEMKKLRHISEKIPLSCWLVAIVELAERFSYYGLSTPFQNYMQNSPEDKPKGVLHLKNSGATALSYFWQFWCYVTPIFGAWIADTYTGKYNAICIFCGIYLVGILILFITSIPSVASYNTSLGGFIVAIIIIGLGTGGVKSNVSPLIADQIPKTKPVIKVLKSGERVIQDPNITIQNVFMFFYLMINIGSLSVIATTSLEHHVDFWAGYLLPLCFFCIAPLVLLLGRPYYVKVPVGEQVIARSFRCTYLAVKNKFNFDAARPSLHPEAGYPWSEKFVEEVRRSVYACKVFVFYPIYWLVYGQMINNFVSQAGQMELHGLPNDILQAINAITIIIFIPICERFVYPFIRRFTPFRAITKIFWGFMFASSAMVYAGVLQHFIYQQGPCYEFPKECAEEFRQVPNRIHIAIQTPAYFLIGMSEILASITGLEYAYTKAPVSMKSFIMSLFLVTNAFGSAIGIALSPTSKNPKLVWTYTGLAVSCFIAGCLFYIIFHHYNDKEDELNQLDYMEEDEVRLQPITSITESLAAR.

The segment at methionine 1–glycine 56 is disordered. Positions aspartate 19–asparagine 42 are enriched in basic and acidic residues. 4 helical membrane-spanning segments follow: residues isoleucine 74 to leucine 95, alanine 124 to alanine 144, alanine 153 to isoleucine 173, and asparagine 180 to valine 200. An N-linked (GlcNAc...) asparagine glycan is attached at asparagine 233. The next 8 membrane-spanning stretches (helical) occupy residues isoleucine 236–alanine 256, phenylalanine 266–leucine 286, valine 345–isoleucine 365, isoleucine 388–isoleucine 408, isoleucine 420–phenylalanine 440, isoleucine 467–threonine 487, serine 502–leucine 522, and tryptophan 533–phenylalanine 553.

This sequence belongs to the major facilitator superfamily. Proton-dependent oligopeptide transporter (POT/PTR) (TC 2.A.17) family.

The protein resides in the cell membrane. It catalyses the reaction a dipeptide(out) + H(+)(out) = a dipeptide(in) + H(+)(in). The catalysed reaction is an L-amino acid tripeptide(out) + H(+)(out) = an L-amino acid tripeptide(in) + H(+)(in). In terms of biological role, peptide transporter that exploits the inwardly directed proton motive force to facilitate the cellular uptake of di/tripeptides. This chain is Peptide transporter PTR_A, found in Candidozyma auris (Yeast).